The primary structure comprises 569 residues: Arginine--tRNA ligase (569 aa).

A 'HIGH' region motif is present at residues 128–138 (ANPTGPLHVGH).

Belongs to the class-I aminoacyl-tRNA synthetase family. Monomer.

The protein localises to the cytoplasm. The catalysed reaction is tRNA(Arg) + L-arginine + ATP = L-arginyl-tRNA(Arg) + AMP + diphosphate. In Paracidovorax citrulli (strain AAC00-1) (Acidovorax citrulli), this protein is Arginine--tRNA ligase.